A 109-amino-acid chain; its full sequence is Nucleoid-associated protein A1S_1684 (109 aa).

The protein belongs to the YbaB/EbfC family. Homodimer.

It localises to the cytoplasm. The protein localises to the nucleoid. Its function is as follows. Binds to DNA and alters its conformation. May be involved in regulation of gene expression, nucleoid organization and DNA protection. The sequence is that of Nucleoid-associated protein A1S_1684 from Acinetobacter baumannii (strain ATCC 17978 / DSM 105126 / CIP 53.77 / LMG 1025 / NCDC KC755 / 5377).